The following is a 499-amino-acid chain: Maturase K (499 aa).

It belongs to the intron maturase 2 family. MatK subfamily.

Its subcellular location is the plastid. It is found in the chloroplast. Usually encoded in the trnK tRNA gene intron. Probably assists in splicing its own and other chloroplast group II introns. In Camellia sasanqua (Christmas camellia), this protein is Maturase K.